The sequence spans 525 residues: GMP synthase [glutamine-hydrolyzing] (525 aa).

Residues R9 to L207 enclose the Glutamine amidotransferase type-1 domain. C86 acts as the Nucleophile in catalysis. Active-site residues include H181 and E183. Positions W208–R400 constitute a GMPS ATP-PPase domain. S235–S241 is a binding site for ATP.

As to quaternary structure, homodimer.

The catalysed reaction is XMP + L-glutamine + ATP + H2O = GMP + L-glutamate + AMP + diphosphate + 2 H(+). The protein operates within purine metabolism; GMP biosynthesis; GMP from XMP (L-Gln route): step 1/1. In terms of biological role, catalyzes the synthesis of GMP from XMP. This chain is GMP synthase [glutamine-hydrolyzing], found in Proteus mirabilis (strain HI4320).